A 363-amino-acid polypeptide reads, in one-letter code: UDP-N-acetylglucosamine--N-acetylmuramyl-(pentapeptide) pyrophosphoryl-undecaprenol N-acetylglucosamine transferase (363 aa).

UDP-N-acetyl-alpha-D-glucosamine-binding positions include 14–16 (TGG), R171, S200, and Q290.

Belongs to the glycosyltransferase 28 family. MurG subfamily.

Its subcellular location is the cell inner membrane. It carries out the reaction di-trans,octa-cis-undecaprenyl diphospho-N-acetyl-alpha-D-muramoyl-L-alanyl-D-glutamyl-meso-2,6-diaminopimeloyl-D-alanyl-D-alanine + UDP-N-acetyl-alpha-D-glucosamine = di-trans,octa-cis-undecaprenyl diphospho-[N-acetyl-alpha-D-glucosaminyl-(1-&gt;4)]-N-acetyl-alpha-D-muramoyl-L-alanyl-D-glutamyl-meso-2,6-diaminopimeloyl-D-alanyl-D-alanine + UDP + H(+). It functions in the pathway cell wall biogenesis; peptidoglycan biosynthesis. Its function is as follows. Cell wall formation. Catalyzes the transfer of a GlcNAc subunit on undecaprenyl-pyrophosphoryl-MurNAc-pentapeptide (lipid intermediate I) to form undecaprenyl-pyrophosphoryl-MurNAc-(pentapeptide)GlcNAc (lipid intermediate II). The protein is UDP-N-acetylglucosamine--N-acetylmuramyl-(pentapeptide) pyrophosphoryl-undecaprenol N-acetylglucosamine transferase of Borrelia garinii subsp. bavariensis (strain ATCC BAA-2496 / DSM 23469 / PBi) (Borreliella bavariensis).